A 363-amino-acid chain; its full sequence is Histidinol-phosphate aminotransferase (363 aa).

N6-(pyridoxal phosphate)lysine is present on lysine 227.

This sequence belongs to the class-II pyridoxal-phosphate-dependent aminotransferase family. Histidinol-phosphate aminotransferase subfamily. Homodimer. The cofactor is pyridoxal 5'-phosphate.

The enzyme catalyses L-histidinol phosphate + 2-oxoglutarate = 3-(imidazol-4-yl)-2-oxopropyl phosphate + L-glutamate. The protein operates within amino-acid biosynthesis; L-histidine biosynthesis; L-histidine from 5-phospho-alpha-D-ribose 1-diphosphate: step 7/9. The chain is Histidinol-phosphate aminotransferase from Akkermansia muciniphila (strain ATCC BAA-835 / DSM 22959 / JCM 33894 / BCRC 81048 / CCUG 64013 / CIP 107961 / Muc).